Reading from the N-terminus, the 249-residue chain is Vitamin B12 import ATP-binding protein BtuD (249 aa).

The ABC transporter domain occupies 1 to 233; that stretch reads MSIVMQLQDV…PNLAQAYGMN (233 aa). 33 to 40 is an ATP binding site; sequence GPNGAGKS.

Belongs to the ABC transporter superfamily. Vitamin B12 importer (TC 3.A.1.13.1) family. The complex is composed of two ATP-binding proteins (BtuD), two transmembrane proteins (BtuC) and a solute-binding protein (BtuF).

The protein localises to the cell inner membrane. The enzyme catalyses an R-cob(III)alamin(out) + ATP + H2O = an R-cob(III)alamin(in) + ADP + phosphate + H(+). In terms of biological role, part of the ABC transporter complex BtuCDF involved in vitamin B12 import. Responsible for energy coupling to the transport system. This chain is Vitamin B12 import ATP-binding protein BtuD, found in Escherichia coli (strain K12 / DH10B).